The sequence spans 494 residues: MGLRVYNTLSGNKEEFVPVEPGKVKMYVCGVTVYDHCHIGHARANVVFDVIYRYFCHLGLDVTYVRNYTDIDDKIINRANREGVTYDLISERFIKEFDRDMERLGLKLPTCQPKATEHIDEIISLVQTLIDKDFAYQAGGDVNFCVEKFDSYLKLSGRTLEDMQAGARIEVDERKRHPMDFALWKEAKPGEPFWESPWGKGRPGWHIECSAMSMKYLGTTFDIHGGGKDLIFPHHENEIAQSEAATGKPFVNYWLHNGFVNINSEKMSKSLGNFFTIKEVLDRYDNEVLRFFLLSAHYRSPIDFSDQNLTEAEAGLERIYKALAAVEETLAAGNGCTGAPVDASSLNEAEGELFDKTTSISARFGEAMDDDFNTALAMAHVFDLVRCVNRVLSETAGASDNICSLCTLIKAEVAKIAGVLGIFSSKPASFLERLKSRKAGNLDIAVDEIERLIAERTAARKAKDFKRSDEIRDQLAAKNIVLLDSQQGTTWSVK.

Cysteine 29 contacts Zn(2+). The 'HIGH' region motif lies at 31-41 (VTVYDHCHIGH). Residues cysteine 209, histidine 234, and glutamate 238 each contribute to the Zn(2+) site. The 'KMSKS' region motif lies at 266–270 (KMSKS). Residue lysine 269 participates in ATP binding.

This sequence belongs to the class-I aminoacyl-tRNA synthetase family. Monomer. It depends on Zn(2+) as a cofactor.

The protein localises to the cytoplasm. It catalyses the reaction tRNA(Cys) + L-cysteine + ATP = L-cysteinyl-tRNA(Cys) + AMP + diphosphate. The chain is Cysteine--tRNA ligase from Geotalea daltonii (strain DSM 22248 / JCM 15807 / FRC-32) (Geobacter daltonii).